The chain runs to 276 residues: Large ribosomal subunit protein uL2 (276 aa).

Disordered stretches follow at residues 30–52 and 224–257; these read VKGLTEGKNKSGGRNNHGRTTSR and VMNPVDHPHGGGEGRTSGGRHPVTPWGKPTKGYK. Residues 41 to 52 are compositionally biased toward polar residues; it reads GGRNNHGRTTSR.

Belongs to the universal ribosomal protein uL2 family. As to quaternary structure, part of the 50S ribosomal subunit. Forms a bridge to the 30S subunit in the 70S ribosome.

In terms of biological role, one of the primary rRNA binding proteins. Required for association of the 30S and 50S subunits to form the 70S ribosome, for tRNA binding and peptide bond formation. It has been suggested to have peptidyltransferase activity; this is somewhat controversial. Makes several contacts with the 16S rRNA in the 70S ribosome. The sequence is that of Large ribosomal subunit protein uL2 from Gluconacetobacter diazotrophicus (strain ATCC 49037 / DSM 5601 / CCUG 37298 / CIP 103539 / LMG 7603 / PAl5).